The sequence spans 410 residues: Lissencephaly-1 homolog B (410 aa).

One can recognise a LisH domain in the interval 7-39 (QRDELNRAIADYLRSNGYEEAYSTFKKEAELDV). Residues 56-82 (TSVIRLQKKVMELESKLNEAKEEITLG) adopt a coiled-coil conformation. 7 WD repeats span residues 106–147 (GHRS…RTLK), 148–187 (GHTDSVQDISFDQTGKLLASCSADMTIKLWDFQGFECIRT), 190–229 (GHDHNVSSVAIMPNGDHIVSASRDKTMKMWEVATGYCVKT), 232–271 (GHREWVRMVRPNQDGTLLASCSNDQTVRVWVVATKECKAE), 274–333 (EHEH…CLMT), 336–377 (GHDN…KTLS), and 379–410 (HEHFVTSLDFHKASPYVVTGSVDQTVKVWECR).

This sequence belongs to the WD repeat LIS1/nudF family. Can self-associate. Component of the cytosolic PAF-AH (I) heterotetrameric enzyme, which is composed of PAFAH1B1 (beta), PAFAH1B2 (alpha2) and PAFAH1B3 (alpha1) subunits. The catalytic activity of the enzyme resides in the alpha1 (PAFAH1B3) and alpha2 (PAFAH1B2) subunits, whereas the beta subunit (PAFAH1B1) has regulatory activity. Trimer formation is not essential for the catalytic activity. Interacts with dynein, dynactin, nde1 and ndel1. In terms of tissue distribution, enriched in the photoreceptor cell layer.

Its subcellular location is the cytoplasm. The protein resides in the cytoskeleton. It localises to the microtubule organizing center. The protein localises to the centrosome. Its function is as follows. Regulatory subunit (beta subunit) of the cytosolic type I platelet-activating factor (PAF) acetylhydrolase (PAF-AH (I)), an enzyme that catalyzes the hydrolyze of the acetyl group at the sn-2 position of PAF and its analogs and participates in the PAF inactivation. Regulates the PAF-AH (I) activity in a catalytic dimer composition-dependent manner. Positively regulates the activity of the minus-end directed microtubule motor protein dynein. May enhance dynein-mediated microtubule sliding by targeting dynein to the microtubule plus end. Required for several dynein- and microtubule-dependent processes such as the maintenance of Golgi integrity, the peripheral transport of microtubule fragments and the coupling of the nucleus and centrosome. May be required for proliferation of neuronal precursors and neuronal migration. Involved in the positioning of nuclei in photoreceptor cells. The chain is Lissencephaly-1 homolog B (pafah1b1b) from Danio rerio (Zebrafish).